The following is a 102-amino-acid chain: Small ribosomal subunit protein uS10 (102 aa).

The protein belongs to the universal ribosomal protein uS10 family. Part of the 30S ribosomal subunit.

Functionally, involved in the binding of tRNA to the ribosomes. In Kineococcus radiotolerans (strain ATCC BAA-149 / DSM 14245 / SRS30216), this protein is Small ribosomal subunit protein uS10.